Reading from the N-terminus, the 101-residue chain is Large ribosomal subunit protein uL24 (101 aa).

Belongs to the universal ribosomal protein uL24 family. In terms of assembly, part of the 50S ribosomal subunit.

Its function is as follows. One of two assembly initiator proteins, it binds directly to the 5'-end of the 23S rRNA, where it nucleates assembly of the 50S subunit. Functionally, one of the proteins that surrounds the polypeptide exit tunnel on the outside of the subunit. The polypeptide is Large ribosomal subunit protein uL24 (Streptococcus gordonii (strain Challis / ATCC 35105 / BCRC 15272 / CH1 / DL1 / V288)).